Reading from the N-terminus, the 202-residue chain is Probable cobalt-precorrin-6B C(15)-methyltransferase (decarboxylating) (202 aa).

Residues Thr-29, 53 to 57, Asp-77, and Val-106 each bind S-adenosyl-L-methionine; that span reads GCGSG.

It belongs to the methyltransferase superfamily. Archaeal-type CbiT family.

The enzyme catalyses Co-precorrin-6B + S-adenosyl-L-methionine = Co-precorrin-7 + S-adenosyl-L-homocysteine + CO2. The protein operates within cofactor biosynthesis; adenosylcobalamin biosynthesis; cob(II)yrinate a,c-diamide from sirohydrochlorin (anaerobic route): step 8/10. Its function is as follows. Catalyzes the methylation of C-15 in cobalt-precorrin-6B followed by the decarboxylation of C-12 to form cobalt-precorrin-7. This is Probable cobalt-precorrin-6B C(15)-methyltransferase (decarboxylating) from Thermoplasma acidophilum (strain ATCC 25905 / DSM 1728 / JCM 9062 / NBRC 15155 / AMRC-C165).